The chain runs to 114 residues: Large ribosomal subunit protein uL18 (114 aa).

It belongs to the universal ribosomal protein uL18 family. As to quaternary structure, part of the 50S ribosomal subunit; part of the 5S rRNA/L5/L18/L25 subcomplex. Contacts the 5S and 23S rRNAs.

In terms of biological role, this is one of the proteins that bind and probably mediate the attachment of the 5S RNA into the large ribosomal subunit, where it forms part of the central protuberance. The polypeptide is Large ribosomal subunit protein uL18 (Bacteroides thetaiotaomicron (strain ATCC 29148 / DSM 2079 / JCM 5827 / CCUG 10774 / NCTC 10582 / VPI-5482 / E50)).